A 321-amino-acid polypeptide reads, in one-letter code: AA9 family lytic polysaccharide monooxygenase C (321 aa).

A signal peptide spans Met-1–Ala-18. His-19 serves as a coordination point for Cu(2+). Residue Asn-33 is glycosylated (N-linked (GlcNAc...) asparagine). 2 disulfide bridges follow: Cys-57-Cys-191 and Cys-161-Cys-242. Cu(2+) is bound at residue His-103. O2 is bound by residues His-177 and Gln-186. Cu(2+) is bound at residue Tyr-188. Asn-195 carries an N-linked (GlcNAc...) asparagine glycan. The 37-residue stretch at Gly-283–Leu-319 folds into the CBM1 domain.

This sequence belongs to the polysaccharide monooxygenase AA9 family. Cu(2+) serves as cofactor.

Its subcellular location is the secreted. It catalyses the reaction [(1-&gt;4)-beta-D-glucosyl]n+m + reduced acceptor + O2 = 4-dehydro-beta-D-glucosyl-[(1-&gt;4)-beta-D-glucosyl]n-1 + [(1-&gt;4)-beta-D-glucosyl]m + acceptor + H2O.. Its function is as follows. Major lytic polysaccharide monooxygenase (LPMO) that depolymerizes crystalline and amorphous polysaccharides via the oxidation of scissile alpha- or beta-(1-4)-glycosidic bonds, yielding C1 and C4 oxidation products. Catalysis by LPMOs requires the reduction of the active-site copper from Cu(II) to Cu(I) by a reducing agent and H(2)O(2) or O(2) as a cosubstrate. This chain is AA9 family lytic polysaccharide monooxygenase C, found in Botryotinia fuckeliana (strain B05.10) (Noble rot fungus).